The sequence spans 642 residues: Threonine--tRNA ligase (642 aa).

The TGS domain occupies 1-61 (MPIITLPDGS…STDSDLSIIT (61 aa)). Residues 243–534 (DHRKIGKQLD…LIEEYAGKFP (292 aa)) form a catalytic region. 3 residues coordinate Zn(2+): cysteine 334, histidine 385, and histidine 511.

The protein belongs to the class-II aminoacyl-tRNA synthetase family. Homodimer. Requires Zn(2+) as cofactor.

The protein resides in the cytoplasm. It carries out the reaction tRNA(Thr) + L-threonine + ATP = L-threonyl-tRNA(Thr) + AMP + diphosphate + H(+). Its function is as follows. Catalyzes the attachment of threonine to tRNA(Thr) in a two-step reaction: L-threonine is first activated by ATP to form Thr-AMP and then transferred to the acceptor end of tRNA(Thr). Also edits incorrectly charged L-seryl-tRNA(Thr). This is Threonine--tRNA ligase from Shewanella denitrificans (strain OS217 / ATCC BAA-1090 / DSM 15013).